A 419-amino-acid chain; its full sequence is UDP-N-acetylglucosamine 1-carboxyvinyltransferase (419 aa).

22 to 23 (KN) lines the phosphoenolpyruvate pocket. Arginine 93 is a binding site for UDP-N-acetyl-alpha-D-glucosamine. Residue cysteine 117 is the Proton donor of the active site. The residue at position 117 (cysteine 117) is a 2-(S-cysteinyl)pyruvic acid O-phosphothioketal. 2 residues coordinate UDP-N-acetyl-alpha-D-glucosamine: aspartate 307 and isoleucine 329.

The protein belongs to the EPSP synthase family. MurA subfamily.

It localises to the cytoplasm. It catalyses the reaction phosphoenolpyruvate + UDP-N-acetyl-alpha-D-glucosamine = UDP-N-acetyl-3-O-(1-carboxyvinyl)-alpha-D-glucosamine + phosphate. Its pathway is cell wall biogenesis; peptidoglycan biosynthesis. In terms of biological role, cell wall formation. Adds enolpyruvyl to UDP-N-acetylglucosamine. This is UDP-N-acetylglucosamine 1-carboxyvinyltransferase from Shewanella sp. (strain MR-7).